A 239-amino-acid chain; its full sequence is Phosphoribosylaminoimidazole-succinocarboxamide synthase (239 aa).

Belongs to the SAICAR synthetase family.

The enzyme catalyses 5-amino-1-(5-phospho-D-ribosyl)imidazole-4-carboxylate + L-aspartate + ATP = (2S)-2-[5-amino-1-(5-phospho-beta-D-ribosyl)imidazole-4-carboxamido]succinate + ADP + phosphate + 2 H(+). It functions in the pathway purine metabolism; IMP biosynthesis via de novo pathway; 5-amino-1-(5-phospho-D-ribosyl)imidazole-4-carboxamide from 5-amino-1-(5-phospho-D-ribosyl)imidazole-4-carboxylate: step 1/2. This is Phosphoribosylaminoimidazole-succinocarboxamide synthase from Acinetobacter baylyi (strain ATCC 33305 / BD413 / ADP1).